A 485-amino-acid chain; its full sequence is Pup--protein ligase (485 aa).

Glu-33 is a Mg(2+) binding site. Arg-76 contacts ATP. Tyr-78 contacts Mg(2+). The Proton acceptor role is filled by Asp-80. A Mg(2+)-binding site is contributed by Glu-86. Residues Thr-89 and Trp-451 each contribute to the ATP site.

This sequence belongs to the Pup ligase/Pup deamidase family. Pup-conjugating enzyme subfamily.

It catalyses the reaction ATP + [prokaryotic ubiquitin-like protein]-L-glutamate + [protein]-L-lysine = ADP + phosphate + N(6)-([prokaryotic ubiquitin-like protein]-gamma-L-glutamyl)-[protein]-L-lysine.. It participates in protein degradation; proteasomal Pup-dependent pathway. It functions in the pathway protein modification; protein pupylation. Its function is as follows. Catalyzes the covalent attachment of the prokaryotic ubiquitin-like protein modifier Pup to the proteasomal substrate proteins, thereby targeting them for proteasomal degradation. This tagging system is termed pupylation. The ligation reaction involves the side-chain carboxylate of the C-terminal glutamate of Pup and the side-chain amino group of a substrate lysine. The chain is Pup--protein ligase from Bifidobacterium longum subsp. infantis (strain ATCC 15697 / DSM 20088 / JCM 1222 / NCTC 11817 / S12).